The chain runs to 264 residues: Regulatory protein RecX (264 aa).

The protein belongs to the RecX family.

The protein resides in the cytoplasm. Functionally, modulates RecA activity. This chain is Regulatory protein RecX, found in Lacticaseibacillus casei (strain BL23) (Lactobacillus casei).